The sequence spans 311 residues: Porphobilinogen deaminase (311 aa).

Cysteine 243 bears the S-(dipyrrolylmethanemethyl)cysteine mark.

It belongs to the HMBS family. In terms of assembly, monomer. It depends on dipyrromethane as a cofactor.

The catalysed reaction is 4 porphobilinogen + H2O = hydroxymethylbilane + 4 NH4(+). The protein operates within porphyrin-containing compound metabolism; protoporphyrin-IX biosynthesis; coproporphyrinogen-III from 5-aminolevulinate: step 2/4. In terms of biological role, tetrapolymerization of the monopyrrole PBG into the hydroxymethylbilane pre-uroporphyrinogen in several discrete steps. This is Porphobilinogen deaminase from Aliivibrio salmonicida (strain LFI1238) (Vibrio salmonicida (strain LFI1238)).